The chain runs to 453 residues: Phosphomannomutase (453 aa).

S96 functions as the Phosphoserine intermediate in the catalytic mechanism. Mg(2+) is bound by residues S96, D243, D245, and D247.

It belongs to the phosphohexose mutase family. Requires Mg(2+) as cofactor.

It catalyses the reaction alpha-D-mannose 1-phosphate = D-mannose 6-phosphate. It functions in the pathway nucleotide-sugar biosynthesis; GDP-alpha-D-mannose biosynthesis; alpha-D-mannose 1-phosphate from D-fructose 6-phosphate: step 2/2. Its pathway is bacterial outer membrane biogenesis; LPS O-antigen biosynthesis. In terms of biological role, involved in GDP-mannose biosynthesis which serves as the activated sugar nucleotide precursor for mannose residues in cell surface polysaccharides. This enzyme participates in synthesis of the LPS O7 antigen. This Escherichia coli protein is Phosphomannomutase (manB).